The chain runs to 325 residues: Holliday junction branch migration complex subunit RuvB (325 aa).

The interval 1–181 is large ATPase domain (RuvB-L); sequence MENRLINPVE…FGIVQRLEFY (181 aa). Residues Ile-20, Arg-21, Gly-62, Lys-65, Thr-66, Thr-67, 128–130, Arg-171, Tyr-181, and Arg-218 each bind ATP; that span reads EDF. Mg(2+) is bound at residue Thr-66. The tract at residues 182-252 is small ATPAse domain (RuvB-S); the sequence is NIEDLTTIVS…IADSALDMLA (71 aa). Residues 255-325 form a head domain (RuvB-H) region; the sequence is RRGLDHLDRR…VLTQMAIDQL (71 aa). 3 residues coordinate DNA: Arg-291, Arg-310, and Arg-315.

Belongs to the RuvB family. As to quaternary structure, homohexamer. Forms an RuvA(8)-RuvB(12)-Holliday junction (HJ) complex. HJ DNA is sandwiched between 2 RuvA tetramers; dsDNA enters through RuvA and exits via RuvB. An RuvB hexamer assembles on each DNA strand where it exits the tetramer. Each RuvB hexamer is contacted by two RuvA subunits (via domain III) on 2 adjacent RuvB subunits; this complex drives branch migration. In the full resolvosome a probable DNA-RuvA(4)-RuvB(12)-RuvC(2) complex forms which resolves the HJ.

It is found in the cytoplasm. The enzyme catalyses ATP + H2O = ADP + phosphate + H(+). The RuvA-RuvB-RuvC complex processes Holliday junction (HJ) DNA during genetic recombination and DNA repair, while the RuvA-RuvB complex plays an important role in the rescue of blocked DNA replication forks via replication fork reversal (RFR). RuvA specifically binds to HJ cruciform DNA, conferring on it an open structure. The RuvB hexamer acts as an ATP-dependent pump, pulling dsDNA into and through the RuvAB complex. RuvB forms 2 homohexamers on either side of HJ DNA bound by 1 or 2 RuvA tetramers; 4 subunits per hexamer contact DNA at a time. Coordinated motions by a converter formed by DNA-disengaged RuvB subunits stimulates ATP hydrolysis and nucleotide exchange. Immobilization of the converter enables RuvB to convert the ATP-contained energy into a lever motion, pulling 2 nucleotides of DNA out of the RuvA tetramer per ATP hydrolyzed, thus driving DNA branch migration. The RuvB motors rotate together with the DNA substrate, which together with the progressing nucleotide cycle form the mechanistic basis for DNA recombination by continuous HJ branch migration. Branch migration allows RuvC to scan DNA until it finds its consensus sequence, where it cleaves and resolves cruciform DNA. The protein is Holliday junction branch migration complex subunit RuvB of Psychrobacter sp. (strain PRwf-1).